The chain runs to 254 residues: DNA repair protein RecO (254 aa).

Belongs to the RecO family.

In terms of biological role, involved in DNA repair and RecF pathway recombination. The sequence is that of DNA repair protein RecO from Rhodopseudomonas palustris (strain BisB18).